A 419-amino-acid polypeptide reads, in one-letter code: Histidine--tRNA ligase (419 aa).

This sequence belongs to the class-II aminoacyl-tRNA synthetase family. As to quaternary structure, homodimer.

Its subcellular location is the cytoplasm. The catalysed reaction is tRNA(His) + L-histidine + ATP = L-histidyl-tRNA(His) + AMP + diphosphate + H(+). In Thiobacillus denitrificans (strain ATCC 25259 / T1), this protein is Histidine--tRNA ligase.